The chain runs to 447 residues: MYLHLTALCVVIPLCYGASMFKHDHYMDNGVRYPNGDGICKQLNETKCDAGFSYDRSICEGPHYWHTISKCFIACGIGQRQSPINIVSYDAKFRQRLPKLKFKPHMEKLKTEVTNHQNRAPEFEPEDGENLYVKLNNLVDGHYKFHNLHVHNGRTRRKGSEHSVNGRFTPMEAHLVFHHDDQTHFEPTRTKLGGAFPGHNDFVVVGVFLEVGDDGFGDEPDDEECKHILKGHHPDNNENGNGDNGNNGYNGDNGNNGDNGNNSYNGDNGNNGVNGNNGYNGDNGNNGDNGNNGYNGDNGNNGDNGNNGENGNNGENGNNGENGHKHGCRVKKAKHLSRILECAYRNDKVREFKKVGEEEGLDVHLTPEMALPPLKYRHYYTYEGSLTTPPCTESVLWVVQKCHVQVSRRVLHALRNVEGYKDGTTLRKYGTRRPTQKNKVTVYKSFK.

Positions 1–17 (MYLHLTALCVVIPLCYG) are cleaved as a signal peptide. An N-linked (GlcNAc...) asparagine glycan is attached at Asn44. The Alpha-carbonic anhydrase domain maps to 50 to 446 (AGFSYDRSIC…KNKVTVYKSF (397 aa)). Residues His149, His151, and His174 each coordinate Zn(2+). Residues 218-329 (DEPDDEECKH…GENGHKHGCR (112 aa)) are disordered. Basic and acidic residues predominate over residues 224 to 236 (ECKHILKGHHPDN). Residues 237–321 (NENGNGDNGN…NNGENGNNGE (85 aa)) show a composition bias toward low complexity. Repeat copies occupy residues 242–244 (GDN), 245–247 (GNN), 248–250 (GYN), 251–253 (GDN), 254–256 (GNN), 257–259 (GDN), 260–262 (GNN), 263–265 (SYN), 266–268 (GDN), 269–271 (GNN), 272–274 (GVN), 275–277 (GNN), 278–280 (GYN), 281–283 (GDN), 284–286 (GNN), 287–289 (GDN), 290–292 (GNN), 293–295 (GYN), 296–298 (GDN), 299–301 (GNN), 302–304 (GDN), 305–307 (GNN), 308–310 (GEN), 311–313 (GNN), 314–316 (GEN), 317–318 (GN), and 320–322 (GEN). Residues 242–322 (GDNGNNGYNG…NGENGNNGEN (81 aa)) are 27 X 3 AA approximate tandem repeats of G-X-N. Asn261 is a glycosylation site (N-linked (GlcNAc...) asparagine). 387–388 (TT) contributes to the substrate binding site.

It belongs to the alpha-carbonic anhydrase family. As to quaternary structure, homooligomer; disulfide-linked. May also be disulfide-linked to insoluble organic matrix. Requires Zn(2+) as cofactor. In terms of processing, N-glycosylated. Expressed at whole regions of the mantle epithelium tissue. Is found in the aragonitic nacreous and calcitic prismatic and foliated layers.

It localises to the secreted. It is found in the extracellular space. The protein localises to the extracellular matrix. It carries out the reaction hydrogencarbonate + H(+) = CO2 + H2O. Its function is as follows. Acts as a negative regulator for calcification in the shells of mollusks. May function both as a calcium concentrator and as a carbonic anhydrase required for production of carbonate ions, which are assembled to CaCO(3) at mineralization sites. Is important for shell formation in both the calcitic prismatic layer and the aragonitic nacreous layer. This Pinctada fucata (Akoya pearl oyster) protein is Nacrein.